The primary structure comprises 212 residues: dITP/XTP pyrophosphatase (212 aa).

7–12 (SNNAKK) serves as a coordination point for substrate. 2 residues coordinate Mg(2+): E39 and D68. D68 (proton acceptor) is an active-site residue. Substrate contacts are provided by residues S69, 165–168 (FGYD), K188, and 193–194 (HR).

This sequence belongs to the HAM1 NTPase family. As to quaternary structure, homodimer. Requires Mg(2+) as cofactor.

It carries out the reaction XTP + H2O = XMP + diphosphate + H(+). It catalyses the reaction dITP + H2O = dIMP + diphosphate + H(+). The enzyme catalyses ITP + H2O = IMP + diphosphate + H(+). Pyrophosphatase that catalyzes the hydrolysis of nucleoside triphosphates to their monophosphate derivatives, with a high preference for the non-canonical purine nucleotides XTP (xanthosine triphosphate), dITP (deoxyinosine triphosphate) and ITP. Seems to function as a house-cleaning enzyme that removes non-canonical purine nucleotides from the nucleotide pool, thus preventing their incorporation into DNA/RNA and avoiding chromosomal lesions. The sequence is that of dITP/XTP pyrophosphatase from Leptothrix cholodnii (strain ATCC 51168 / LMG 8142 / SP-6) (Leptothrix discophora (strain SP-6)).